The sequence spans 288 residues: Type II restriction enzyme DpnII (288 aa).

This sequence belongs to the DpnII type II restriction endonuclease family. In terms of assembly, homodimer.

It catalyses the reaction Endonucleolytic cleavage of DNA to give specific double-stranded fragments with terminal 5'-phosphates.. A P subtype restriction enzyme that recognizes the double-stranded unmethylated sequence 5'-GATC-3' and cleaves before G-1. The polypeptide is Type II restriction enzyme DpnII (Streptococcus pneumoniae).